Consider the following 716-residue polypeptide: Probable calcium-binding mitochondrial carrier K02F3.2 (716 aa).

The interval Met-1 to Pro-345 is N-terminal domain. 4 consecutive EF-hand domains span residues Tyr-93 to Phe-121, Ser-127 to Leu-162, Gln-165 to Leu-195, and Phe-198 to His-233. Ca(2+)-binding residues include Asp-106, Thr-108, Asp-110, Glu-117, Asp-140, Asn-142, Ser-144, Thr-146, and Glu-151. 5 residues coordinate Ca(2+): Asp-211, Asn-213, Asn-215, Thr-217, and Asp-222. The linker loop domain stretch occupies residues Glu-346–Ala-362. A carrier domain region spans residues Gly-372 to Ser-664. Solcar repeat units follow at residues Leu-376 to Lys-468, Ile-475 to Ala-560, and Asn-568 to Leu-656. The next 6 membrane-spanning stretches (helical) occupy residues Phe-382 to Ile-399, Gly-443 to Asn-462, Gly-485 to Leu-498, Gly-535 to Tyr-554, Phe-574 to Ala-591, and Gly-631 to Tyr-650. The interval Arg-665 to Lys-716 is C-terminal domain.

It belongs to the mitochondrial carrier (TC 2.A.29) family. In terms of assembly, homodimer (via N-terminus).

It localises to the mitochondrion inner membrane. Its function is as follows. Mitochondrial and calcium-binding carrier that catalyzes the calcium-dependent exchange of cytoplasmic glutamate with mitochondrial aspartate across the mitochondrial inner membrane. The polypeptide is Probable calcium-binding mitochondrial carrier K02F3.2 (Caenorhabditis elegans).